We begin with the raw amino-acid sequence, 722 residues long: D-(-)-3-hydroxybutyrate oligomer hydrolase (722 aa).

Positions 1 to 25 (MKTMQGKGSGRRLRGALLVTMAASG) are cleaved as a signal peptide. Residue Ser319 is the Charge relay system of the active site.

This sequence belongs to the D-(-)-3-hydroxybutyrate oligomer hydrolase family.

The protein localises to the secreted. It carries out the reaction (3R)-hydroxybutanoate dimer + H2O = 2 (R)-3-hydroxybutanoate + H(+). It participates in lipid metabolism; butanoate metabolism. Inhibited by diisopropylfluorophosphate (DFP). Participates in the degradation of poly-3-hydroxybutyrate (PHB). It works downstream of poly(3-hydroxybutyrate) depolymerase, hydrolyzing D(-)-3-hydroxybutyrate oligomers of various length (3HB-oligomers) into 3HB-monomers. This Ralstonia pickettii (Burkholderia pickettii) protein is D-(-)-3-hydroxybutyrate oligomer hydrolase.